The following is a 36-amino-acid chain: Photosystem I reaction center subunit VIII (36 aa).

Residues 8–28 (SIFVPLVGLVFPAIAIASLFL) traverse the membrane as a helical segment.

It belongs to the PsaI family.

The protein resides in the plastid. It localises to the chloroplast thylakoid membrane. May help in the organization of the PsaL subunit. The polypeptide is Photosystem I reaction center subunit VIII (Jasminum nudiflorum (Winter jasmine)).